The following is a 140-amino-acid chain: Large-conductance mechanosensitive channel (140 aa).

2 consecutive transmembrane segments (helical) span residues 16–36 and 86–106; these read VVDLAVGVIIGAAFGKIVDSI and GSFLTIVLNFLILAFIIFLMV.

The protein belongs to the MscL family. Homopentamer.

It is found in the cell inner membrane. Channel that opens in response to stretch forces in the membrane lipid bilayer. May participate in the regulation of osmotic pressure changes within the cell. The protein is Large-conductance mechanosensitive channel of Anaeromyxobacter sp. (strain K).